Reading from the N-terminus, the 165-residue chain is Chorismate pyruvate-lyase (165 aa).

4 residues coordinate substrate: methionine 35, arginine 77, leucine 115, and glutamate 156.

This sequence belongs to the UbiC family. Monomer.

Its subcellular location is the cytoplasm. It catalyses the reaction chorismate = 4-hydroxybenzoate + pyruvate. The protein operates within cofactor biosynthesis; ubiquinone biosynthesis. Functionally, removes the pyruvyl group from chorismate, with concomitant aromatization of the ring, to provide 4-hydroxybenzoate (4HB) for the ubiquinone pathway. This chain is Chorismate pyruvate-lyase, found in Salmonella agona (strain SL483).